Here is a 374-residue protein sequence, read N- to C-terminus: Type IV secretion system protein PtlG homolog (374 aa).

A helical transmembrane segment spans residues 38 to 56 (WMFALVAVALSCLLATGIW). The segment at 87–116 (PREPEPAPLPDMPAAPNPILPQPRPAPPVP) is disordered. The span at 92 to 116 (PAPLPDMPAAPNPILPQPRPAPPVP) shows a compositional bias: pro residues.

Belongs to the TrbI/VirB10 family.

Its subcellular location is the cell membrane. The polypeptide is Type IV secretion system protein PtlG homolog (ptlG) (Bordetella parapertussis (strain 12822 / ATCC BAA-587 / NCTC 13253)).